A 132-amino-acid chain; its full sequence is Small ribosomal subunit protein uS8 (132 aa).

It belongs to the universal ribosomal protein uS8 family. In terms of assembly, part of the 30S ribosomal subunit. Contacts proteins S5 and S12.

One of the primary rRNA binding proteins, it binds directly to 16S rRNA central domain where it helps coordinate assembly of the platform of the 30S subunit. The chain is Small ribosomal subunit protein uS8 from Corynebacterium jeikeium (strain K411).